Reading from the N-terminus, the 100-residue chain is Small ribosomal subunit protein uS14c (100 aa).

It belongs to the universal ribosomal protein uS14 family. As to quaternary structure, part of the 30S ribosomal subunit.

It localises to the plastid. It is found in the chloroplast. Binds 16S rRNA, required for the assembly of 30S particles. This is Small ribosomal subunit protein uS14c from Cyanidioschyzon merolae (strain NIES-3377 / 10D) (Unicellular red alga).